The following is a 270-amino-acid chain: Zinc transporter ZupT (270 aa).

8 helical membrane passes run 8 to 28 (ILVV…GGFI), 40 to 60 (LTFA…VELL), 78 to 98 (WIAI…DYLV), 131 to 151 (ILFA…TFAA), 162 to 182 (IALA…VPLY), 192 to 212 (LFYS…AMFF), 216 to 236 (FLTP…MVFI), and 250 to 270 (HHHI…IVLI). 2 residues coordinate Fe(2+): asparagine 141 and glutamate 144. Zn(2+) is bound by residues glutamate 144 and histidine 169. Asparagine 170, glutamate 173, and glutamate 202 together coordinate Fe(2+). Residue glutamate 173 coordinates Zn(2+).

The protein belongs to the ZIP transporter (TC 2.A.5) family. ZupT subfamily.

It is found in the cell membrane. It catalyses the reaction Zn(2+)(in) = Zn(2+)(out). Its function is as follows. Mediates zinc uptake. May also transport other divalent cations. This is Zinc transporter ZupT from Akkermansia muciniphila (strain ATCC BAA-835 / DSM 22959 / JCM 33894 / BCRC 81048 / CCUG 64013 / CIP 107961 / Muc).